A 333-amino-acid chain; its full sequence is tRNA-modifying protein YgfZ (333 aa).

Tryptophan 33 and tryptophan 195 together coordinate folate.

This sequence belongs to the tRNA-modifying YgfZ family.

Its subcellular location is the cytoplasm. In terms of biological role, folate-binding protein involved in regulating the level of ATP-DnaA and in the modification of some tRNAs. It is probably a key factor in regulatory networks that act via tRNA modification, such as initiation of chromosomal replication. The polypeptide is tRNA-modifying protein YgfZ (Pectobacterium carotovorum subsp. carotovorum (strain PC1)).